We begin with the raw amino-acid sequence, 212 residues long: MHILVTGFAPFDNQNINPSWEAVTQLEDIIGTHTIDKLKLPTSFKKVDNIINKTLASNHYDVVLAIGQAGGRNAITPERVAINIDDARIPDNDDFQPIDQAIHLDGAPAYFSNLPVKAMTQSIINQGLPGALSNSAGTFVCNHTLYHLGYLQDKHYPHLRFGFIHVPYIPEQVIGKPDTPSMPLEKIVAGLTAAIEAISNDEDLHLALGTTE.

Catalysis depends on residues E78, C141, and H165.

This sequence belongs to the peptidase C15 family. Homotetramer.

It localises to the cytoplasm. The catalysed reaction is Release of an N-terminal pyroglutamyl group from a polypeptide, the second amino acid generally not being Pro.. Its function is as follows. Removes 5-oxoproline from various penultimate amino acid residues except L-proline. In Staphylococcus aureus (strain NCTC 8325 / PS 47), this protein is Pyrrolidone-carboxylate peptidase.